The primary structure comprises 443 residues: Phosphoglucosamine mutase (443 aa).

The active-site Phosphoserine intermediate is the serine 102. Mg(2+) contacts are provided by serine 102, aspartate 241, aspartate 243, and aspartate 245. Position 102 is a phosphoserine (serine 102).

This sequence belongs to the phosphohexose mutase family. The cofactor is Mg(2+). Activated by phosphorylation.

It carries out the reaction alpha-D-glucosamine 1-phosphate = D-glucosamine 6-phosphate. In terms of biological role, catalyzes the conversion of glucosamine-6-phosphate to glucosamine-1-phosphate. This chain is Phosphoglucosamine mutase, found in Albidiferax ferrireducens (strain ATCC BAA-621 / DSM 15236 / T118) (Rhodoferax ferrireducens).